Here is a 324-residue protein sequence, read N- to C-terminus: Fe-S cluster assembly protein dre2 (324 aa).

The N-terminal SAM-like domain stretch occupies residues 28 to 158 (GSPSKRTLLL…KMDQPKSFAI (131 aa)). Residues 159–217 (PLRRNGKKKDAAKTETFAPAPAPAPPVQPVTVGMINNDDDYENDDDLIDEDTLLSDEDL) are linker. [2Fe-2S] cluster is bound by residues cysteine 226, cysteine 237, cysteine 240, and cysteine 242. Residues 226 to 242 (CQPKPGRRRRACKDCTC) are fe-S binding site A. [4Fe-4S] cluster contacts are provided by cysteine 287, cysteine 290, cysteine 298, and cysteine 301. 2 consecutive short sequence motifs (cx2C motif) follow at residues 287 to 290 (CGNC) and 298 to 301 (CAGC). A fe-S binding site B region spans residues 287–301 (CGNCALGDAFRCAGC).

It belongs to the anamorsin family. As to quaternary structure, monomer. Interacts with tah18. Interacts with mia40. The cofactor is [2Fe-2S] cluster. [4Fe-4S] cluster serves as cofactor.

It is found in the cytoplasm. It localises to the mitochondrion intermembrane space. Component of the cytosolic iron-sulfur (Fe-S) protein assembly (CIA) machinery required for the maturation of extramitochondrial Fe-S proteins. Part of an electron transfer chain functioning in an early step of cytosolic Fe-S biogenesis, facilitating the de novo assembly of a [4Fe-4S] cluster on the scaffold complex cfd1-nbp35. Electrons are transferred to dre2 from NADPH via the FAD- and FMN-containing protein tah18. Tah18-dre2 are also required for the assembly of the diferric tyrosyl radical cofactor of ribonucleotide reductase (RNR), probably by providing electrons for reduction during radical cofactor maturation in the catalytic small subunit rnr2. This is Fe-S cluster assembly protein dre2 from Aspergillus niger (strain ATCC MYA-4892 / CBS 513.88 / FGSC A1513).